The primary structure comprises 131 residues: MDTSKGEGKRVIKLPGSQEQGEEEDDIGEDSKKTRALTPSGKRASGSTQRSCQVENCAAEMTNAKPYHRRHKVCEFHAKAPVVLHSGLQQRFCQQCSRFHELSEFDEAKRSCRRRLAGHNERRRKSSHDTH.

The span at 1 to 10 shows a compositional bias: basic and acidic residues; that stretch reads MDTSKGEGKR. The disordered stretch occupies residues 1-52; the sequence is MDTSKGEGKRVIKLPGSQEQGEEEDDIGEDSKKTRALTPSGKRASGSTQRSC. The SBP-type zinc-finger motif lies at 49-126; the sequence is QRSCQVENCA…AGHNERRRKS (78 aa). Residues Cys52, Cys57, Cys74, His77, Cys93, Cys96, His100, and Cys112 each coordinate Zn(2+). Residues 109-125 carry the Bipartite nuclear localization signal motif; that stretch reads KRSCRRRLAGHNERRRK.

The protein localises to the nucleus. Functionally, probable transcriptional factor. Binds to the promoter of the SQUAMOSA gene. The chain is Squamosa promoter-binding protein 1 (SBP1) from Antirrhinum majus (Garden snapdragon).